We begin with the raw amino-acid sequence, 461 residues long: MSKNIYNNNAQNKRTNRSLYDDEDGPAHVLQTNDEDGTNKYKWENRFEKTWLTIDEDEHGLRPSNQEERNTRNRRLKNKDRDGILSQDQRVRRGMQRHLCLILDLSKTLSNQDLKPSRYQVLLQNVELFIKEFFDQNPISQLSIIITKNSKAEKISELSGNRLRHIQAMKDAIAMEGEPSIQNSLEVALSSLCYVPKYGSREVLFIFSSLTTCDPSSLQKTIQSLKNESIRVSFIHMAAELYICKAIAEQTNGTSKVILNEEHFNESLMLKCQPPPTIGKTEAALVEMGFPQQITSTVPSPCICHEKMKYSGYICPRCGVKSCELPTDCQICNLSLVSSPHLARSYHHLFQIPLFNEVNWKELNKNVTCIGCLSSSEKSILSLFFSCPRCQEIFCLDCDLFIHESLHNCPGCENKLQNTNTNTNGKTNGNEITNGNGNGNGNENENGNGNGNGNGNGNGLH.

The segment covering 1–13 (MSKNIYNNNAQNK) has biased composition (polar residues). Disordered stretches follow at residues 1–37 (MSKN…DEDG) and 61–83 (LRPS…DRDG). The span at 61-71 (LRPSNQEERNT) shows a compositional bias: basic and acidic residues. The VWFA domain maps to 98 to 275 (HLCLILDLSK…ESLMLKCQPP (178 aa)). Residues 315-332 (CPRCGVKSCELPTDCQIC) form a C4-type zinc finger. Positions 423 to 447 (TNGKTNGNEITNGNGNGNGNENENG) are enriched in low complexity. The disordered stretch occupies residues 423-461 (TNGKTNGNEITNGNGNGNGNENENGNGNGNGNGNGNGLH). The interval 434–459 (NGNGNGNGNENENGNGNGNGNGNGNG) is 13 X 2 tandem repeat of N-[GE]. A compositionally biased stretch (gly residues) spans 448–461 (NGNGNGNGNGNGLH).

It belongs to the GTF2H2 family. In terms of assembly, component of the 7-subunit TFIIH core complex composed of XPB/repB, XPD/repD, gtf2h1, gtf2h2, gtf2h3, gtf2h4 and gtf2h5, which is active in NER. The core complex associates with the 3-subunit CDK-activating kinase (CAK) module composed of cycH/cyclin H, cdk7 and mnat1 to form the 10-subunit holoenzyme (holo-TFIIH) active in transcription.

It localises to the nucleus. Its function is as follows. Component of the general transcription and DNA repair factor IIH (TFIIH) core complex, which is involved in general and transcription-coupled nucleotide excision repair (NER) of damaged DNA and, when complexed to CAK, in RNA transcription by RNA polymerase II. In NER, TFIIH acts by opening DNA around the lesion to allow the excision of the damaged oligonucleotide and its replacement by a new DNA fragment. In transcription, TFIIH has an essential role in transcription initiation. When the pre-initiation complex (PIC) has been established, TFIIH is required for promoter opening and promoter escape. Phosphorylation of the C-terminal tail (CTD) of the largest subunit of RNA polymerase II by the kinase module CAK controls the initiation of transcription. This is General transcription factor IIH subunit 2 (gtf2h2) from Dictyostelium discoideum (Social amoeba).